Reading from the N-terminus, the 458-residue chain is Probable beta-eliminating lyase (458 aa).

The residue at position 257 (lysine 257) is an N6-(pyridoxal phosphate)lysine.

The protein belongs to the beta-eliminating lyase family. Requires pyridoxal 5'-phosphate as cofactor.

This is Probable beta-eliminating lyase from Trichomonas vaginalis (strain ATCC PRA-98 / G3).